Here is a 97-residue protein sequence, read N- to C-terminus: Mitochondrial import inner membrane translocase subunit Tim8 A (97 aa).

Positions 43–66 (CWEKCMDKPGPKLDSRAEACFVNC) match the Twin CX3C motif motif. Cystine bridges form between cysteine 43–cysteine 66 and cysteine 47–cysteine 62. Serine 57, serine 87, serine 94, and serine 96 each carry phosphoserine.

This sequence belongs to the small Tim family. In terms of assembly, heterohexamer; composed of 3 copies of TIMM8A and 3 copies of TIMM13, named soluble 70 kDa complex. Associates with the TIM22 complex, whose core is composed of TIMM22. In terms of tissue distribution, present at high level in liver and brain, and at lower level in muscle and heart. In CNS sections, it is predominantly present in the soma and the dendritic portion of the Purkinje cells of the cerebellum, but not in the glial cells. Scattered expression also is also detected in the brain stem, olfactory bulb, substantia nigra, hippocampus and striatum (at protein level). Ubiquitously expressed.

The protein resides in the mitochondrion inner membrane. Its function is as follows. Mitochondrial intermembrane chaperone that participates in the import and insertion of some multi-pass transmembrane proteins into the mitochondrial inner membrane. Also required for the transfer of beta-barrel precursors from the TOM complex to the sorting and assembly machinery (SAM complex) of the outer membrane. Acts as a chaperone-like protein that protects the hydrophobic precursors from aggregation and guide them through the mitochondrial intermembrane space. The TIMM8-TIMM13 complex mediates the import of proteins such as TIMM23, SLC25A12/ARALAR1 and SLC25A13/ARALAR2, while the predominant TIMM9-TIMM10 70 kDa complex mediates the import of much more proteins. The protein is Mitochondrial import inner membrane translocase subunit Tim8 A (Timm8a1) of Mus musculus (Mouse).